The sequence spans 195 residues: Adenylate kinase (195 aa).

8–16 (GIPGVGKTT) is a binding site for ATP.

This sequence belongs to the archaeal adenylate kinase family.

The protein localises to the cytoplasm. It carries out the reaction AMP + ATP = 2 ADP. The sequence is that of Adenylate kinase from Saccharolobus islandicus (strain M.14.25 / Kamchatka #1) (Sulfolobus islandicus).